A 288-amino-acid polypeptide reads, in one-letter code: 4-hydroxy-tetrahydrodipicolinate synthase (288 aa).

Thr42 provides a ligand contact to pyruvate. Tyr129 functions as the Proton donor/acceptor in the catalytic mechanism. The Schiff-base intermediate with substrate role is filled by Lys157. Ile198 is a binding site for pyruvate.

It belongs to the DapA family. In terms of assembly, homotetramer; dimer of dimers.

The protein resides in the cytoplasm. The enzyme catalyses L-aspartate 4-semialdehyde + pyruvate = (2S,4S)-4-hydroxy-2,3,4,5-tetrahydrodipicolinate + H2O + H(+). The protein operates within amino-acid biosynthesis; L-lysine biosynthesis via DAP pathway; (S)-tetrahydrodipicolinate from L-aspartate: step 3/4. Its function is as follows. Catalyzes the condensation of (S)-aspartate-beta-semialdehyde [(S)-ASA] and pyruvate to 4-hydroxy-tetrahydrodipicolinate (HTPA). The chain is 4-hydroxy-tetrahydrodipicolinate synthase from Chlamydia abortus (strain DSM 27085 / S26/3) (Chlamydophila abortus).